The sequence spans 131 residues: Acanthoscurrin-2 (131 aa).

Lysine amide is present on Lys130.

In terms of tissue distribution, expressed in hemocytes and secreted into the plasma following bacterial immune challenge.

It localises to the secreted. Antimicrobial protein. Strong activity against the Gram-negative bacterium E.coli SBS363 and yeast C.albicans. No detectable activity against the Gram-positive bacterium M.luteus. This Acanthoscurria gomesiana (Tarantula spider) protein is Acanthoscurrin-2.